The primary structure comprises 229 residues: Lytic polysaccharide monooxygenase-like protein ham-7 (229 aa).

Positions 1–17 (MLTSTLLALASAALASA) are cleaved as a signal peptide. A Cu(2+)-binding site is contributed by histidine 18. 2 disulfide bridges follow: cysteine 47/cysteine 157 and cysteine 122/cysteine 178. N-linked (GlcNAc...) asparagine glycans are attached at residues asparagine 55, asparagine 98, asparagine 139, asparagine 174, and asparagine 180. A lipid anchor (GPI-anchor amidated serine) is attached at serine 206. A propeptide spans 207–229 (AAASLARMAGWVPLVAGGLWLML) (removed in mature form).

It belongs to the X325 family. It depends on Cu(2+) as a cofactor.

It is found in the cell membrane. Functionally, lytic polysaccharide monooxygenase-like protein that has diverged to biological functions other than polysaccharide degradation since it does not perform oxidative cleavage of polysaccharides. Acts as the major cell wall sensor that regulates MAK-1-dependent hyphal anastomosis, the fusion of hyphal cells. May also act as a cell surface-bound protein that functions in the copper-accumulation pathway. This chain is Lytic polysaccharide monooxygenase-like protein ham-7, found in Neurospora crassa (strain ATCC 24698 / 74-OR23-1A / CBS 708.71 / DSM 1257 / FGSC 987).